A 496-amino-acid chain; its full sequence is Fibronectin type III and SPRY domain-containing protein 1 (496 aa).

Residues 4 to 99 are a coiled coil; sequence QKEALRKIIT…ALESSEELLE (96 aa). A COS domain is found at 105–162; sequence LLATDSKDFPQAAKQIKDGVTMAPAFRLSLKAKVSDNMSHLMVDFAQERRMLQALTFL. The Fibronectin type-III domain maps to 164–268; it reads VPSAPVIDLT…EPVTLETPAF (105 aa). A B30.2/SPRY domain is found at 268-477; that stretch reads FMFRLDASTS…VTTGLQVPSS (210 aa). The tract at residues 301 to 336 is disordered; it reads KAREKDGKGRTASPVNSPARGTPSPKRMPSGRGGRD. Residues R310 and R320 each carry the omega-N-methylarginine modification.

In terms of assembly, oligomerization is required for binding to microtubules.

It localises to the cytoplasm. It is found in the cytoskeleton. The protein resides in the microtubule organizing center. Its subcellular location is the centrosome. The protein localises to the nucleus. It localises to the cleavage furrow. Its function is as follows. May be involved in microtubule organization and stabilization. The chain is Fibronectin type III and SPRY domain-containing protein 1 (FSD1) from Bos taurus (Bovine).